A 193-amino-acid polypeptide reads, in one-letter code: Allatostatin A (193 aa).

The N-terminal stretch at 1-25 (MKTSSLIAMRLIIFYLLSVVGRSTA) is a signal peptide. Residues 26–64 (AVEEAPASSLHIPRLNPLSSNLEYDEPSEKRAYAYISEY) constitute a propeptide that is removed on maturation. Isoleucine amide is present on Ile74. The propeptide occupies 78 to 84 (WIDNSED). Isoleucine amide occurs at positions 94 and 105. The propeptide occupies 109–139 (NSGYRPLGMDFSVDNMDFHSREDNLDDFIDD). An Isoleucine amide modification is found at Ile150. Ser165 bears the Serine amide mark. The propeptide occupies 169–193 (LNDVVGPKYLLGLGKGLSENENLIQ).

This sequence belongs to the allatostatin family. Allatostatins A1, A2 and A3 are expressed in brain, antennal lobes, optical lobes, gnathal ganglia, the retrocerebral complex and thoracic, abdominal and ventral ganglia. Allatostain A4 is expressed in brain (at protein level).

It is found in the secreted. May act as a neurotransmitter or neuromodulator. This Camponotus floridanus (Florida carpenter ant) protein is Allatostatin A.